We begin with the raw amino-acid sequence, 401 residues long: Serine--glyoxylate aminotransferase (401 aa).

Met-1 bears the N-acetylmethionine mark. Pyridoxal 5'-phosphate contacts are provided by residues 68 to 70, Thr-148, and 200 to 201; these read TGT and QK. Residue Lys-201 coordinates 3-hydroxypyruvate. The residue at position 201 (Lys-201) is an N6-(pyridoxal phosphate)lysine. Ser-204 carries the post-translational modification Phosphoserine. Arg-347 provides a ligand contact to 3-hydroxypyruvate. The Microbody targeting signal motif lies at 399–401; the sequence is SRI.

The protein belongs to the class-V pyridoxal-phosphate-dependent aminotransferase family. In terms of assembly, forms homodimers. Interacts with RABGAP22. Pyridoxal 5'-phosphate serves as cofactor. As to expression, widely expressed. Preferentially expressed in green, leafy tissues, root cortex and epidermis, developing siliques and dry seeds.

The protein resides in the peroxisome. It catalyses the reaction glyoxylate + L-serine = 3-hydroxypyruvate + glycine. It carries out the reaction glyoxylate + L-alanine = glycine + pyruvate. The catalysed reaction is L-serine + pyruvate = 3-hydroxypyruvate + L-alanine. The enzyme catalyses 3-hydroxypyruvate + L-asparagine = 2-oxosuccinamate + L-serine. It catalyses the reaction L-asparagine + glyoxylate = 2-oxosuccinamate + glycine. It carries out the reaction L-asparagine + pyruvate = 2-oxosuccinamate + L-alanine. Its activity is regulated as follows. Inhibited by aminooxyacetate and beta-chloro-L-alanine, but not by p-hydroxymercuribenzoate. Its function is as follows. Photorespiratory enzyme that catalyzes transamination reactions with multiple substrates, including asparagine. Functions exclusively as a catabolic enzyme in Asn metabolism. Involved in root development during seedling establishment after seed germination by regulating serine homeostasis and acetate conversion. The sequence is that of Serine--glyoxylate aminotransferase from Arabidopsis thaliana (Mouse-ear cress).